A 142-amino-acid polypeptide reads, in one-letter code: Mitochondrial import receptor subunit TOM22 homolog (142 aa).

Positions 1–11 (MAAAVAAAGAG) are enriched in low complexity. Positions 1-42 (MAAAVAAAGAGEPQSPDELLPKGDAEKPEEELEEDDDEELDE) are disordered. At alanine 2 the chain carries N-acetylalanine. Residues 2 to 83 (AAAVAAAGAG…AQKMYRFSRA (82 aa)) lie on the Cytoplasmic side of the membrane. Serine 15 is modified (phosphoserine). The segment covering 27–42 (KPEEELEEDDDEELDE) has biased composition (acidic residues). Residues 41–50 (DETLSERLWG) form an import sequence; necessary for mitochondrion outer membrane localization and integration in the TOM complex region. Threonine 43 carries the post-translational modification Phosphothreonine. Serine 45 is subject to Phosphoserine. Residues 83–103 (AALWIGTTSFMILVLPVVFET) are TMD; necessary for mitochondrion outer membrane localization and integration in the TOM complex. The helical transmembrane segment at 84–103 (ALWIGTTSFMILVLPVVFET) threads the bilayer. Topologically, residues 104-142 (EKLQMEQQQQLQQRQILLGPNTGLSGGMPGALPSLPGKI) are mitochondrial intermembrane. The tract at residues 123-142 (PNTGLSGGMPGALPSLPGKI) is C-tail signal; necessary for mitochondrion outer membrane localization and integration in the TOM complex.

Belongs to the Tom22 family. Forms part of the preprotein translocase complex of the outer mitochondrial membrane (TOM complex) which consists of at least 7 different proteins (TOMM5, TOMM6, TOMM7, TOMM20, TOMM22, TOMM40 and TOMM70). Interacts with TOMM40. Interacts with PPP2R2B. Ubiquitous.

Its subcellular location is the mitochondrion outer membrane. Functionally, central receptor component of the translocase of the outer membrane of mitochondria (TOM complex) responsible for the recognition and translocation of cytosolically synthesized mitochondrial preproteins. Together with the peripheral receptor TOM20 functions as the transit peptide receptor and facilitates the movement of preproteins into the translocation pore. Required for the translocation across the mitochondrial outer membrane of cytochrome P450 monooxygenases. This is Mitochondrial import receptor subunit TOM22 homolog (TOMM22) from Homo sapiens (Human).